A 381-amino-acid chain; its full sequence is Dual-specificity RNA methyltransferase RlmN (381 aa).

The Proton acceptor role is filled by Glu96. One can recognise a Radical SAM core domain in the interval Thr102 to Asp342. A disulfide bridge links Cys109 with Cys345. Cys116, Cys120, and Cys123 together coordinate [4Fe-4S] cluster. S-adenosyl-L-methionine is bound by residues Gly170–Glu171, Ser202, Ser224–His226, and Asn302. The active-site S-methylcysteine intermediate is the Cys345.

Belongs to the radical SAM superfamily. RlmN family. [4Fe-4S] cluster is required as a cofactor.

Its subcellular location is the cytoplasm. It carries out the reaction adenosine(2503) in 23S rRNA + 2 reduced [2Fe-2S]-[ferredoxin] + 2 S-adenosyl-L-methionine = 2-methyladenosine(2503) in 23S rRNA + 5'-deoxyadenosine + L-methionine + 2 oxidized [2Fe-2S]-[ferredoxin] + S-adenosyl-L-homocysteine. The enzyme catalyses adenosine(37) in tRNA + 2 reduced [2Fe-2S]-[ferredoxin] + 2 S-adenosyl-L-methionine = 2-methyladenosine(37) in tRNA + 5'-deoxyadenosine + L-methionine + 2 oxidized [2Fe-2S]-[ferredoxin] + S-adenosyl-L-homocysteine. Functionally, specifically methylates position 2 of adenine 2503 in 23S rRNA and position 2 of adenine 37 in tRNAs. m2A2503 modification seems to play a crucial role in the proofreading step occurring at the peptidyl transferase center and thus would serve to optimize ribosomal fidelity. The chain is Dual-specificity RNA methyltransferase RlmN from Pseudomonas putida (strain ATCC 700007 / DSM 6899 / JCM 31910 / BCRC 17059 / LMG 24140 / F1).